A 166-amino-acid polypeptide reads, in one-letter code: Cofilin-2 (166 aa).

Positions 4–153 constitute an ADF-H domain; it reads GVTVNDEVIK…KDRSTLGEKL (150 aa). S24 carries the post-translational modification Phosphoserine. The Nuclear localization signal motif lies at 30–34; sequence KKRKK.

This sequence belongs to the actin-binding proteins ADF family. The phosphorylation of Ser-24 may prevent recognition of the nuclear localization signal. Widely distributed in various tissues.

The protein localises to the nucleus matrix. It is found in the cytoplasm. It localises to the cytoskeleton. Functionally, controls reversibly actin polymerization and depolymerization in a pH-sensitive manner. It has the ability to bind G- and F-actin in a 1:1 ratio of cofilin to actin. It is the major component of intranuclear and cytoplasmic actin rods. The chain is Cofilin-2 (CFL2) from Gallus gallus (Chicken).